The chain runs to 139 residues: MGREKKQEYALLTAWGASFIATLGSLYFSEIMKFEPCVLCWYQRIFMYPFVLWLGIAVAKKDYRIASYSLPIASIGACISLYHYAIQKVAAFSAAGAACGRVPCTGEYINWFGFVTIPFLALIGFITIAVCSFIVIKNK.

Residues 8-27 (EYALLTAWGASFIATLGSLY) traverse the membrane as a helical segment. Residues Cys37 and Cys40 are joined by a disulfide bond. The next 2 membrane-spanning stretches (helical) occupy residues 42–61 (YQRIFMYPFVLWLGIAVAKK) and 68–85 (YSLPIASIGACISLYHYA). A disulfide bridge links Cys99 with Cys104. A helical transmembrane segment spans residues 113 to 135 (GFVTIPFLALIGFITIAVCSFIV).

Belongs to the DsbB family. BdbC subfamily.

The protein localises to the cell membrane. In terms of biological role, required for disulfide bond formation in some proteins. This Bacillus cereus (strain ATCC 14579 / DSM 31 / CCUG 7414 / JCM 2152 / NBRC 15305 / NCIMB 9373 / NCTC 2599 / NRRL B-3711) protein is Probable disulfide formation protein C.